Here is a 176-residue protein sequence, read N- to C-terminus: Lipoprotein signal peptidase (176 aa).

The next 4 helical transmembrane spans lie at Leu-10–Leu-30, Val-48–Phe-68, Tyr-78–Met-98, and Met-102–Asp-122. Active-site residues include Asp-131 and Asp-149. The chain crosses the membrane as a helical span at residues His-141–Ile-161.

Belongs to the peptidase A8 family.

The protein localises to the cell inner membrane. The catalysed reaction is Release of signal peptides from bacterial membrane prolipoproteins. Hydrolyzes -Xaa-Yaa-Zaa-|-(S,diacylglyceryl)Cys-, in which Xaa is hydrophobic (preferably Leu), and Yaa (Ala or Ser) and Zaa (Gly or Ala) have small, neutral side chains.. The protein operates within protein modification; lipoprotein biosynthesis (signal peptide cleavage). This protein specifically catalyzes the removal of signal peptides from prolipoproteins. This is Lipoprotein signal peptidase from Acinetobacter baumannii (strain ATCC 17978 / DSM 105126 / CIP 53.77 / LMG 1025 / NCDC KC755 / 5377).